The following is a 294-amino-acid chain: Ribosomal RNA small subunit methyltransferase H (294 aa).

Residues 37–39, Asp-58, Leu-93, Asp-105, and Gln-112 contribute to the S-adenosyl-L-methionine site; that span reads GGH.

It belongs to the methyltransferase superfamily. RsmH family.

The protein resides in the cytoplasm. The catalysed reaction is cytidine(1402) in 16S rRNA + S-adenosyl-L-methionine = N(4)-methylcytidine(1402) in 16S rRNA + S-adenosyl-L-homocysteine + H(+). Functionally, specifically methylates the N4 position of cytidine in position 1402 (C1402) of 16S rRNA. The protein is Ribosomal RNA small subunit methyltransferase H of Fervidobacterium nodosum (strain ATCC 35602 / DSM 5306 / Rt17-B1).